Consider the following 347-residue polypeptide: DnaJ protein ERDJ3B (347 aa).

Residues 1 to 23 (MAAPRWIGPLLLLLLHFVAAVAG) form the signal peptide. The region spanning 25-90 (SYYDVLQVPK…EKRKIYDRYG (66 aa)) is the J domain.

Interacts with BIP1.

The protein resides in the endoplasmic reticulum. Its function is as follows. May play a role in protein folding in the endoplasmic reticulum. The chain is DnaJ protein ERDJ3B from Oryza sativa subsp. japonica (Rice).